A 212-amino-acid chain; its full sequence is Large ribosomal subunit protein uL1 (212 aa).

The protein belongs to the universal ribosomal protein uL1 family. Part of the 50S ribosomal subunit.

Functionally, binds directly to 23S rRNA. Probably involved in E site tRNA release. Protein L1 is also a translational repressor protein, it controls the translation of its operon by binding to its mRNA. The chain is Large ribosomal subunit protein uL1 from Halobacterium salinarum (strain ATCC 29341 / DSM 671 / R1).